Consider the following 348-residue polypeptide: Dihydroorotase (348 aa).

Zn(2+) contacts are provided by histidine 14 and histidine 16. Substrate contacts are provided by residues 16-18 (HLR) and asparagine 42. Zn(2+)-binding residues include lysine 100, histidine 137, and histidine 175. Lysine 100 is subject to N6-carboxylysine. Position 137 (histidine 137) interacts with substrate. Position 220 (leucine 220) interacts with substrate. Aspartate 248 serves as a coordination point for Zn(2+). Aspartate 248 is an active-site residue. Positions 252 and 264 each coordinate substrate.

The protein belongs to the metallo-dependent hydrolases superfamily. DHOase family. Class II DHOase subfamily. As to quaternary structure, homodimer. The cofactor is Zn(2+).

The enzyme catalyses (S)-dihydroorotate + H2O = N-carbamoyl-L-aspartate + H(+). The protein operates within pyrimidine metabolism; UMP biosynthesis via de novo pathway; (S)-dihydroorotate from bicarbonate: step 3/3. Its function is as follows. Catalyzes the reversible cyclization of carbamoyl aspartate to dihydroorotate. This is Dihydroorotase from Synechococcus sp. (strain CC9605).